Consider the following 353-residue polypeptide: Putative permease PerM (353 aa).

7 helical membrane-spanning segments follow: residues 19 to 39 (IALL…SGLL), 72 to 92 (IVLV…LPIA), 156 to 176 (LVGL…VFFL), 217 to 237 (VLEM…FGLN), 240 to 260 (LLLA…AFVV), 281 to 301 (CFAV…PVLF), and 310 to 330 (LVII…GVFF).

It belongs to the autoinducer-2 exporter (AI-2E) (TC 2.A.86) family.

Its subcellular location is the cell membrane. The chain is Putative permease PerM (perM) from Escherichia coli O157:H7.